The chain runs to 318 residues: NADH-ubiquinone oxidoreductase chain 1 (318 aa).

A run of 9 helical transmembrane segments spans residues 2–22, 37–57, 69–89, 100–120, 136–156, 171–191, 231–251, 253–273, and 293–313; these read FLMNILCLVIPILLAMAFLTL, PNIVGPYGLLQPIADAIKLFI, LMFTLAPTLAFTLALSLWIPM, LGVLFILALSSLAVYSILWSG, VAQTISYEVTLAIILLSIMMM, HMWLIFPLWPLAMMWFISTLA, IIMMNALTTTLFLGAFHNPLF, ELFTVNFITKTLILTMMFLWV, and FLPLTLALCMFHVSMPALSAG.

The protein belongs to the complex I subunit 1 family. Core subunit of respiratory chain NADH dehydrogenase (Complex I) which is composed of 45 different subunits.

Its subcellular location is the mitochondrion inner membrane. The enzyme catalyses a ubiquinone + NADH + 5 H(+)(in) = a ubiquinol + NAD(+) + 4 H(+)(out). Core subunit of the mitochondrial membrane respiratory chain NADH dehydrogenase (Complex I) which catalyzes electron transfer from NADH through the respiratory chain, using ubiquinone as an electron acceptor. Essential for the catalytic activity and assembly of complex I. This is NADH-ubiquinone oxidoreductase chain 1 (MT-ND1) from Euphractus sexcinctus (Six-banded armadillo).